The sequence spans 223 residues: Peptidyl-prolyl cis-trans isomerase, mitochondrial (223 aa).

Residues 1–44 (MFGPRHFSVLKTTGSLVSSTFSSSLKPTATFSCARAFSQTSSIM) constitute a mitochondrion transit peptide. One can recognise a PPIase cyclophilin-type domain in the interval 62-222 (NKPTSEIKAQ…KKPTIVDCGA (161 aa)).

This sequence belongs to the cyclophilin-type PPIase family.

Its subcellular location is the mitochondrion. It is found in the cytoplasm. It carries out the reaction [protein]-peptidylproline (omega=180) = [protein]-peptidylproline (omega=0). With respect to regulation, binds cyclosporin A (CsA). CsA mediates some of its effects via an inhibitory action on PPIase. Functionally, PPIases accelerate the folding of proteins. It catalyzes the cis-trans isomerization of proline imidic peptide bonds in oligopeptides. The polypeptide is Peptidyl-prolyl cis-trans isomerase, mitochondrial (csr-1) (Neurospora crassa (strain ATCC 24698 / 74-OR23-1A / CBS 708.71 / DSM 1257 / FGSC 987)).